The chain runs to 248 residues: Protein UL24 homolog (248 aa).

The disordered stretch occupies residues 194–248 (DRPRPTAQGHRPRTHVGPKPSQLTARVPRSARAGRAGGRKGQVGAVGQVCPGAQK). The segment covering 218 to 227 (ARVPRSARAG) has biased composition (low complexity).

The protein belongs to the herpesviridae UL24 family.

It localises to the virion. The protein resides in the host cytoplasm. Its subcellular location is the host nucleus. The protein localises to the host nucleolus. It is found in the host Golgi apparatus. In terms of biological role, may participate in nuclear egress of viral particles. Plays a role in the dispersal of several host nucleolar proteins including NCL/nucleolin and NPM1. Since deletion of host NCL/nucleolin negatively impact on nuclear egress, UL24 supposedly acts on this process through its effect on host nucleoli. This chain is Protein UL24 homolog, found in Homo sapiens (Human).